Consider the following 228-residue polypeptide: Lipoprotein LpqN (228 aa).

The signal sequence occupies residues 1–19 (MKHFTAAVATVALSLALAG). Residue Cys-20 is the site of N-palmitoyl cysteine attachment. Cys-20 carries S-diacylglycerol cysteine lipidation. Positions 26-53 (TDSAPTTSPTTTSPTTSTTTTSATTSAQ) are disordered. Residues 28–52 (SAPTTSPTTTSPTTSTTTTSATTSA) are compositionally biased toward low complexity.

As to quaternary structure, interacts with the periplasmic loop domains of the mycolate transporters MmpL3 and MmpL11. Also interacts with secreted cell envelope biosynthetic enzymes such as Ag85A. These interactions are weak and may require a putative mycobacterial adapter protein or molecule. Interacts with human ubiquitin ligase CBL.

The protein localises to the cell membrane. It is found in the secreted. Its function is as follows. Involved in cell envelope biogenesis. May act as a membrane fusion protein, connecting MmpL transporters with periplasmic proteins, and play a role in cell envelope lipid changes during biofilm maturation. Is also a virulence factor required for intracellular survival. Associates with CBL, a host ubiquitin ligase, and probably blocks the normal functions of CBL and disturbs CBL-mediated antibacterial activity. Interaction counteracts antibacterial defense but causes a reciprocal enhancement of antiviral defense. The sequence is that of Lipoprotein LpqN from Mycobacterium tuberculosis (strain ATCC 25618 / H37Rv).